A 442-amino-acid chain; its full sequence is Probable glycine dehydrogenase (decarboxylating) subunit 1 (442 aa).

The protein belongs to the GcvP family. N-terminal subunit subfamily. As to quaternary structure, the glycine cleavage system is composed of four proteins: P, T, L and H. In this organism, the P 'protein' is a heterodimer of two subunits.

It catalyses the reaction N(6)-[(R)-lipoyl]-L-lysyl-[glycine-cleavage complex H protein] + glycine + H(+) = N(6)-[(R)-S(8)-aminomethyldihydrolipoyl]-L-lysyl-[glycine-cleavage complex H protein] + CO2. Functionally, the glycine cleavage system catalyzes the degradation of glycine. The P protein binds the alpha-amino group of glycine through its pyridoxal phosphate cofactor; CO(2) is released and the remaining methylamine moiety is then transferred to the lipoamide cofactor of the H protein. This is Probable glycine dehydrogenase (decarboxylating) subunit 1 from Geotalea daltonii (strain DSM 22248 / JCM 15807 / FRC-32) (Geobacter daltonii).